A 176-amino-acid chain; its full sequence is RNA 2',3'-cyclic phosphodiesterase (176 aa).

H39 functions as the Proton donor in the catalytic mechanism. Short sequence motifs (HXTX) lie at residues 39–42 (HITL) and 122–125 (HLTV). H122 serves as the catalytic Proton acceptor.

It belongs to the 2H phosphoesterase superfamily. ThpR family.

It carries out the reaction a 3'-end 2',3'-cyclophospho-ribonucleotide-RNA + H2O = a 3'-end 2'-phospho-ribonucleotide-RNA + H(+). Functionally, hydrolyzes RNA 2',3'-cyclic phosphodiester to an RNA 2'-phosphomonoester. The chain is RNA 2',3'-cyclic phosphodiesterase from Archaeoglobus fulgidus (strain ATCC 49558 / DSM 4304 / JCM 9628 / NBRC 100126 / VC-16).